A 324-amino-acid polypeptide reads, in one-letter code: 4-diphosphocytidyl-2-C-methyl-D-erythritol kinase (324 aa).

The active site involves Lys11. 108 to 118 (PIGAGLAGGST) contributes to the ATP binding site. Asp150 is an active-site residue.

Belongs to the GHMP kinase family. IspE subfamily.

The catalysed reaction is 4-CDP-2-C-methyl-D-erythritol + ATP = 4-CDP-2-C-methyl-D-erythritol 2-phosphate + ADP + H(+). The protein operates within isoprenoid biosynthesis; isopentenyl diphosphate biosynthesis via DXP pathway; isopentenyl diphosphate from 1-deoxy-D-xylulose 5-phosphate: step 3/6. Its function is as follows. Catalyzes the phosphorylation of the position 2 hydroxy group of 4-diphosphocytidyl-2C-methyl-D-erythritol. This Cyanothece sp. (strain PCC 7425 / ATCC 29141) protein is 4-diphosphocytidyl-2-C-methyl-D-erythritol kinase.